The sequence spans 344 residues: WW domain binding protein 1-like (344 aa).

A helical transmembrane segment spans residues 42–62; that stretch reads LWWFWLVWTIIIILSCCCVCH. Disordered regions lie at residues 132 to 250 and 302 to 321; these read LLPP…RFTG and CLSS…PRPP. A compositionally biased stretch (low complexity) spans 145 to 173; sequence PGADQPQGSQGAQSSPLSGPSRSSTRPPS. Serine 173 carries the phosphoserine modification. Residues 212-228 show a composition bias toward basic and acidic residues; it reads LDRDSECKEELLKDSSS.

The protein resides in the membrane. The protein is WW domain binding protein 1-like (Wbp1l) of Rattus norvegicus (Rat).